The chain runs to 128 residues: Ribosome-binding factor A (128 aa).

It belongs to the RbfA family. Monomer. Binds 30S ribosomal subunits, but not 50S ribosomal subunits or 70S ribosomes.

It is found in the cytoplasm. Functionally, one of several proteins that assist in the late maturation steps of the functional core of the 30S ribosomal subunit. Associates with free 30S ribosomal subunits (but not with 30S subunits that are part of 70S ribosomes or polysomes). Required for efficient processing of 16S rRNA. May interact with the 5'-terminal helix region of 16S rRNA. This chain is Ribosome-binding factor A, found in Haemophilus influenzae (strain 86-028NP).